The sequence spans 222 residues: Beta-casein (222 aa).

Positions 1-15 are cleaved as a signal peptide; the sequence is MKVLILACLVALAIA. The residue at position 27 (T27) is a Phosphothreonine. Residues S30, S32, S33, and S34 each carry the phosphoserine modification.

It belongs to the beta-casein family. As to expression, mammary gland specific. Secreted in milk.

It is found in the secreted. In terms of biological role, important role in determination of the surface properties of the casein micelles. This is Beta-casein (CSN2) from Capra hircus (Goat).